The primary structure comprises 429 residues: Saccharopine dehydrogenase-like oxidoreductase (429 aa).

Ala-2 bears the N-acetylalanine mark. A phosphoserine mark is found at Ser-209, Ser-215, and Ser-217.

It belongs to the saccharopine dehydrogenase family.

The protein is Saccharopine dehydrogenase-like oxidoreductase (Sccpdh) of Rattus norvegicus (Rat).